The chain runs to 718 residues: Homeobox-leucine zipper protein HDG9 (718 aa).

The span at 1–12 (MDFTRDDNSSDE) shows a compositional bias: basic and acidic residues. A disordered region spans residues 1–35 (MDFTRDDNSSDERENDVDANTNNRHEKKGYHRHTN). The homeobox DNA-binding region spans 26–85 (EKKGYHRHTNEQIHRLETYFKECPHPDEFQRRLLGEELNLKPKQIKFWFQNKRTQAKSHN). Residues 78–152 (RTQAKSHNEK…LKDEYERVSN (75 aa)) are a coiled coil. Residues 169–209 (PYLHGPSNHASTSKNRPALYGTSSNRLPEPSSIFRGPYTRG) are disordered. A compositionally biased stretch (polar residues) spans 176-194 (NHASTSKNRPALYGTSSNR). One can recognise an START domain in the interval 232 to 464 (SQLEKIAMLE…LERTCERLIF (233 aa)).

It belongs to the HD-ZIP homeobox family. Class IV subfamily. In terms of tissue distribution, expressed in anthers with highest levels in the tapetum and pollen grains, and chalazal end of the embryo sac.

The protein localises to the nucleus. Functionally, probable transcription factor that binds to the DNA sequence 5'-GCATTAAATGCGCA-3'. The chain is Homeobox-leucine zipper protein HDG9 (HDG9) from Arabidopsis thaliana (Mouse-ear cress).